Here is a 340-residue protein sequence, read N- to C-terminus: Phosphoribosylformylglycinamidine cyclo-ligase (340 aa).

Belongs to the AIR synthase family.

It is found in the cytoplasm. The catalysed reaction is 2-formamido-N(1)-(5-O-phospho-beta-D-ribosyl)acetamidine + ATP = 5-amino-1-(5-phospho-beta-D-ribosyl)imidazole + ADP + phosphate + H(+). Its pathway is purine metabolism; IMP biosynthesis via de novo pathway; 5-amino-1-(5-phospho-D-ribosyl)imidazole from N(2)-formyl-N(1)-(5-phospho-D-ribosyl)glycinamide: step 2/2. This is Phosphoribosylformylglycinamidine cyclo-ligase from Streptococcus pneumoniae (strain P1031).